An 89-amino-acid chain; its full sequence is MLGGLGKLAAEGLAHRTEKATEGAIHAVEEVVKEVVGHAKETGEKAIAEAIKKAQESGDKKMKEITETVTNTVTNAITHAAESLDKLGQ.

The protein belongs to the FAM25 family.

In Homo sapiens (Human), this protein is Protein FAM25A.